The chain runs to 97 residues: Cobalt transport protein CbiN (97 aa).

The next 2 helical transmembrane spans lie at 6–26 (VLMI…YSGL) and 68–88 (SLLF…FFGY).

This sequence belongs to the CbiN family. Forms an energy-coupling factor (ECF) transporter complex composed of an ATP-binding protein (A component, CbiO), a transmembrane protein (T component, CbiQ) and 2 possible substrate-capture proteins (S components, CbiM and CbiN) of unknown stoichimetry.

It localises to the cell membrane. It functions in the pathway cofactor biosynthesis; adenosylcobalamin biosynthesis. Functionally, part of the energy-coupling factor (ECF) transporter complex CbiMNOQ involved in cobalt import. The sequence is that of Cobalt transport protein CbiN from Methanococcus maripaludis (strain C7 / ATCC BAA-1331).